We begin with the raw amino-acid sequence, 206 residues long: Ras-related protein Rab-18 (206 aa).

N-acetylmethionine is present on methionine 1. 11 residues coordinate GTP: serine 17, glycine 20, lysine 21, serine 22, serine 23, aspartate 34, proline 35, threonine 40, glycine 66, lysine 123, and aspartate 125. Serine 22 contributes to the Mg(2+) binding site. 2 consecutive short sequence motifs (switch) follow at residues 31 to 45 and 63 to 80; these read DTFD…GVDF and DTAG…YYRG. Threonine 40 contributes to the Mg(2+) binding site. At serine 144 the chain carries Phosphoserine. A GTP-binding site is contributed by alanine 152. The S-palmitoyl cysteine moiety is linked to residue cysteine 199. Position 203 is a cysteine methyl ester (cysteine 203). Cysteine 203 carries S-geranylgeranyl cysteine lipidation. Residues 204–206 constitute a propeptide, removed in mature form; that stretch reads SVL.

Belongs to the small GTPase superfamily. Rab family. Interacts (in GTP-bound form) with ZFYVE1. Interacts with ZW10 and this interaction is enhanced in the presence of ZFYVE1. Interacts with BSCL2. It depends on Mg(2+) as a cofactor.

The protein resides in the endoplasmic reticulum membrane. It is found in the golgi apparatus. The protein localises to the cis-Golgi network membrane. Its subcellular location is the lipid droplet. It localises to the apical cell membrane. It catalyses the reaction GTP + H2O = GDP + phosphate + H(+). Regulated by guanine nucleotide exchange factors (GEFs) which promote the exchange of bound GDP for free GTP. Regulated by GTPase activating proteins (GAPs) which increase the GTP hydrolysis activity at the ER membrane. Inhibited by GDP dissociation inhibitors (GDIs) which prevent Rab-GDP dissociation. The small GTPases Rab are key regulators of intracellular membrane trafficking, from the formation of transport vesicles to their fusion with membranes. Rabs cycle between an inactive GDP-bound form and an active GTP-bound form that is able to recruit to membranes different sets of downstream effectors directly responsible for vesicle formation, movement, tethering and fusion. RAB18 is required for the localization of ZFYVE1 to lipid droplets and for its function in mediating the formation of endoplasmic reticulum-lipid droplets (ER-LD) contacts. Also required for maintaining endoplasmic reticulum structure. Plays a role in apical endocytosis/recycling. Plays a key role in eye and brain development and neurodegeneration. This is Ras-related protein Rab-18 (RAB18) from Bos taurus (Bovine).